The chain runs to 259 residues: 5'-nucleotidase SurE (259 aa).

4 residues coordinate a divalent metal cation: Asp8, Asp9, Ser41, and Asn100.

The protein belongs to the SurE nucleotidase family. Requires a divalent metal cation as cofactor.

The protein resides in the cytoplasm. The enzyme catalyses a ribonucleoside 5'-phosphate + H2O = a ribonucleoside + phosphate. Nucleotidase that shows phosphatase activity on nucleoside 5'-monophosphates. In Natranaerobius thermophilus (strain ATCC BAA-1301 / DSM 18059 / JW/NM-WN-LF), this protein is 5'-nucleotidase SurE.